The sequence spans 113 residues: Large ribosomal subunit protein uL22 (113 aa).

The protein belongs to the universal ribosomal protein uL22 family. Part of the 50S ribosomal subunit.

In terms of biological role, this protein binds specifically to 23S rRNA; its binding is stimulated by other ribosomal proteins, e.g. L4, L17, and L20. It is important during the early stages of 50S assembly. It makes multiple contacts with different domains of the 23S rRNA in the assembled 50S subunit and ribosome. Its function is as follows. The globular domain of the protein is located near the polypeptide exit tunnel on the outside of the subunit, while an extended beta-hairpin is found that lines the wall of the exit tunnel in the center of the 70S ribosome. The protein is Large ribosomal subunit protein uL22 of Natranaerobius thermophilus (strain ATCC BAA-1301 / DSM 18059 / JW/NM-WN-LF).